The following is a 467-amino-acid chain: Mitochondrial distribution and morphology protein 10 (467 aa).

The tract at residues 361-393 (GLPDTAPSRNRECDDLPPPRRDNYHHQRSPHAS) is disordered. Basic and acidic residues predominate over residues 369 to 385 (RNRECDDLPPPRRDNYH).

The protein belongs to the MDM10 family. As to quaternary structure, component of the ER-mitochondria encounter structure (ERMES) or MDM complex, composed of MMM1, MDM10, MDM12 and MDM34. Associates with the mitochondrial outer membrane sorting assembly machinery SAM(core) complex.

The protein localises to the mitochondrion outer membrane. Functionally, component of the ERMES/MDM complex, which serves as a molecular tether to connect the endoplasmic reticulum and mitochondria. Components of this complex are involved in the control of mitochondrial shape and protein biogenesis and may function in phospholipid exchange. MDM10 is involved in the late assembly steps of the general translocase of the mitochondrial outer membrane (TOM complex). Functions in the TOM40-specific route of the assembly of outer membrane beta-barrel proteins, including the association of TOM40 with the receptor TOM22 and small TOM proteins. Can associate with the SAM(core) complex as well as the MDM12-MMM1 complex, both involved in late steps of the major beta-barrel assembly pathway, that is responsible for biogenesis of all outer membrane beta-barrel proteins. May act as a switch that shuttles between both complexes and channels precursor proteins into the TOM40-specific pathway. Plays a role in mitochondrial morphology and in the inheritance of mitochondria. This chain is Mitochondrial distribution and morphology protein 10, found in Ajellomyces capsulatus (strain NAm1 / WU24) (Darling's disease fungus).